A 214-amino-acid polypeptide reads, in one-letter code: Large ribosomal subunit protein uL3 (214 aa).

Residues 130–151 (FSSNRASHGNSRSHNTPGSIGQ) are compositionally biased toward polar residues. The interval 130 to 163 (FSSNRASHGNSRSHNTPGSIGQAQDPGRVFPGKR) is disordered. N5-methylglutamine is present on glutamine 153.

Belongs to the universal ribosomal protein uL3 family. Part of the 50S ribosomal subunit. Forms a cluster with proteins L14 and L19. Methylated by PrmB.

Its function is as follows. One of the primary rRNA binding proteins, it binds directly near the 3'-end of the 23S rRNA, where it nucleates assembly of the 50S subunit. In Chromobacterium violaceum (strain ATCC 12472 / DSM 30191 / JCM 1249 / CCUG 213 / NBRC 12614 / NCIMB 9131 / NCTC 9757 / MK), this protein is Large ribosomal subunit protein uL3.